The sequence spans 580 residues: Glypican-3 (580 aa).

The N-terminal stretch at 1–24 (MAGTVRTACLVVAMLLSLDFPGQA) is a signal peptide. Position 25 is a pyrrolidone carboxylic acid (Gln25). 7 disulfides stabilise this stretch: Cys35–Cys72, Cys65–Cys262, Cys73–Cys265, Cys197–Cys349, Cys252–Cys285, Cys274–Cys422, and Cys278–Cys410. N-linked (GlcNAc...) asparagine glycans are attached at residues Asn124 and Asn241. Ser352 carries the post-translational modification Phosphoserine. The N-linked (GlcNAc...) asparagine glycan is linked to Asn418. Ser495 and Ser509 each carry an O-linked (Xyl...) (glycosaminoglycan) serine glycan. Asn554 carries the GPI-anchor amidated asparagine lipid modification. Positions 555 to 580 (LGNVHSPLKLLTSMAISVVCFFFLVH) are cleaved as a propeptide — removed in mature form.

It belongs to the glypican family. In terms of assembly, heterodimer; disulfide-linked. Cleavage by a furin-like convertase results in production of alpha and beta chains which form a disulfide-linked heterodimer. Interacts with DPP4. Interacts with FGF2. Interacts with WNT5A. Also interacts with WNT3A and WNT7B. Interacts with hedgehog protein SHH; the heparan sulfate chains are not required for the interaction. Also interacts with hedgehog protein IHH. Interacts with CD81. Interacts with Wnt receptors FZD4, FZD7 and FZD8; the heparan sulfate chains are required for the interaction. Post-translationally, O-glycosylated; contains heparan sulfate and/or chondroitin sulfate. In terms of processing, cleaved intracellularly by a furin-like convertase to generate 2 subunits, alpha and beta, which remain associated through disulfide bonds and are associated with the cell surface via the GPI-anchor. This processing is essential for its role in inhibition of hedgehog signaling. A second proteolytic event may result in cleavage of the protein on the cell surface, separating it from the GPI-anchor and leading to its shedding from the cell surface.

The protein resides in the cell membrane. Its function is as follows. Cell surface proteoglycan. Negatively regulates the hedgehog signaling pathway when attached via the GPI-anchor to the cell surface by competing with the hedgehog receptor PTC1 for binding to hedgehog proteins. Binding to the hedgehog protein SHH triggers internalization of the complex by endocytosis and its subsequent lysosomal degradation. Positively regulates the canonical Wnt signaling pathway by binding to the Wnt receptor Frizzled and stimulating the binding of the Frizzled receptor to Wnt ligands. Positively regulates the non-canonical Wnt signaling pathway. Binds to CD81 which decreases the availability of free CD81 for binding to the transcriptional repressor HHEX, resulting in nuclear translocation of HHEX and transcriptional repression. Inhibits the dipeptidyl peptidase activity of DPP4. Plays a role in limb patterning and skeletal development by controlling the cellular response to BMP4. Modulates the effects of growth factors BMP2, BMP7 and FGF7 on renal branching morphogenesis. Required for coronary vascular development. Plays a role in regulating cell movements during gastrulation. The chain is Glypican-3 (GPC3) from Pan troglodytes (Chimpanzee).